Reading from the N-terminus, the 198-residue chain is Thymidine kinase (198 aa).

Residues 15–22 (GCMFSGKT) and 87–90 (DEAQ) contribute to the ATP site. Glutamate 88 acts as the Proton acceptor in catalysis. Residues cysteine 144, cysteine 147, cysteine 182, and histidine 185 each coordinate Zn(2+).

The protein belongs to the thymidine kinase family. Homotetramer.

It localises to the cytoplasm. It catalyses the reaction thymidine + ATP = dTMP + ADP + H(+). The polypeptide is Thymidine kinase (Coprothermobacter proteolyticus (strain ATCC 35245 / DSM 5265 / OCM 4 / BT)).